Here is a 387-residue protein sequence, read N- to C-terminus: Acetate kinase (387 aa).

Mg(2+) is bound at residue asparagine 14. Lysine 21 serves as a coordination point for ATP. A substrate-binding site is contributed by arginine 80. The active-site Proton donor/acceptor is the aspartate 137. ATP is bound by residues 197–201 (HLGNG), 271–273 (DFR), and 319–323 (GIGEN). Glutamate 373 is a Mg(2+) binding site.

It belongs to the acetokinase family. Homodimer. Mg(2+) is required as a cofactor. Mn(2+) serves as cofactor.

The protein localises to the cytoplasm. It carries out the reaction acetate + ATP = acetyl phosphate + ADP. It functions in the pathway metabolic intermediate biosynthesis; acetyl-CoA biosynthesis; acetyl-CoA from acetate: step 1/2. Catalyzes the formation of acetyl phosphate from acetate and ATP. Can also catalyze the reverse reaction. The chain is Acetate kinase from Mycobacterium avium (strain 104).